The primary structure comprises 69 residues: Large ribosomal subunit protein uL29 (69 aa).

Belongs to the universal ribosomal protein uL29 family.

The protein is Large ribosomal subunit protein uL29 of Mycoplasmopsis agalactiae (strain NCTC 10123 / CIP 59.7 / PG2) (Mycoplasma agalactiae).